A 328-amino-acid polypeptide reads, in one-letter code: Sulfate adenylyltransferase subunit 2 (328 aa).

Positions 309 to 328 (RAIDKDQTASMEKKKQEGYF) are disordered.

It belongs to the PAPS reductase family. CysD subfamily. In terms of assembly, heterodimer composed of CysD, the smaller subunit, and CysN.

The catalysed reaction is sulfate + ATP + H(+) = adenosine 5'-phosphosulfate + diphosphate. The protein operates within sulfur metabolism; hydrogen sulfide biosynthesis; sulfite from sulfate: step 1/3. Functionally, with CysN forms the ATP sulfurylase (ATPS) that catalyzes the adenylation of sulfate producing adenosine 5'-phosphosulfate (APS) and diphosphate, the first enzymatic step in sulfur assimilation pathway. APS synthesis involves the formation of a high-energy phosphoric-sulfuric acid anhydride bond driven by GTP hydrolysis by CysN coupled to ATP hydrolysis by CysD. This chain is Sulfate adenylyltransferase subunit 2, found in Hyphomonas neptunium (strain ATCC 15444).